The sequence spans 725 residues: Kelch domain-containing protein SSO1033 (725 aa).

The N-terminal stretch at 1–28 (MKYGNMKKWAPLILFLFSLLLLQGISLH) is a signal peptide. 6 Kelch repeats span residues 59-100 (SLYI…VYNN), 101-145 (TIYV…VYNN), 146-199 (AIYV…FNGT), 201-248 (LIIV…YYRG), 250-297 (LFIV…QVGN), and 299-342 (LYLA…VTLG). Fibronectin type-III domains lie at 323 to 410 (PPLP…TPAS), 411 to 504 (VPNP…TKAS), 505 to 583 (VFAF…VVYY), and 585 to 665 (PPAS…TGDY).

The polypeptide is Kelch domain-containing protein SSO1033 (Saccharolobus solfataricus (strain ATCC 35092 / DSM 1617 / JCM 11322 / P2) (Sulfolobus solfataricus)).